Reading from the N-terminus, the 148-residue chain is Large ribosomal subunit protein bL9 (148 aa).

It belongs to the bacterial ribosomal protein bL9 family.

Binds to the 23S rRNA. The polypeptide is Large ribosomal subunit protein bL9 (Salinispora arenicola (strain CNS-205)).